A 133-amino-acid polypeptide reads, in one-letter code: MLSDPIADMLTRIRNATRAYKESVDIPASKFKEELAKLLVREGYVAGVERLRPEGQKFDVLRITLKYGQKREQVIKHIERVSRPGRRAYVSAENLPRVQRGLGLAVVSTSKGLLPDREARKQGVGGEVVCILW.

It belongs to the universal ribosomal protein uS8 family. As to quaternary structure, part of the 30S ribosomal subunit. Contacts proteins S5 and S12.

In terms of biological role, one of the primary rRNA binding proteins, it binds directly to 16S rRNA central domain where it helps coordinate assembly of the platform of the 30S subunit. The protein is Small ribosomal subunit protein uS8 of Deinococcus geothermalis (strain DSM 11300 / CIP 105573 / AG-3a).